The following is a 491-amino-acid chain: Ketol-acid reductoisomerase (NADP(+)) (491 aa).

The KARI N-terminal Rossmann domain occupies 15–208; the sequence is AQLGKCRFMG…GGHRAGVLES (194 aa). NADP(+) is bound by residues 45–48, Arg68, Arg76, Ser78, and 108–110; these read CGAQ and DKQ. Residue His132 is part of the active site. Gly158 serves as a coordination point for NADP(+). 2 KARI C-terminal knotted domains span residues 209-344 and 345-484; these read SFVA…TAPQ and YEGK…MTDM. Positions 217, 221, 389, and 393 each coordinate Mg(2+). Ser414 provides a ligand contact to substrate.

This sequence belongs to the ketol-acid reductoisomerase family. The cofactor is Mg(2+).

It carries out the reaction (2R)-2,3-dihydroxy-3-methylbutanoate + NADP(+) = (2S)-2-acetolactate + NADPH + H(+). The catalysed reaction is (2R,3R)-2,3-dihydroxy-3-methylpentanoate + NADP(+) = (S)-2-ethyl-2-hydroxy-3-oxobutanoate + NADPH + H(+). It functions in the pathway amino-acid biosynthesis; L-isoleucine biosynthesis; L-isoleucine from 2-oxobutanoate: step 2/4. Its pathway is amino-acid biosynthesis; L-valine biosynthesis; L-valine from pyruvate: step 2/4. Involved in the biosynthesis of branched-chain amino acids (BCAA). Catalyzes an alkyl-migration followed by a ketol-acid reduction of (S)-2-acetolactate (S2AL) to yield (R)-2,3-dihydroxy-isovalerate. In the isomerase reaction, S2AL is rearranged via a Mg-dependent methyl migration to produce 3-hydroxy-3-methyl-2-ketobutyrate (HMKB). In the reductase reaction, this 2-ketoacid undergoes a metal-dependent reduction by NADPH to yield (R)-2,3-dihydroxy-isovalerate. The chain is Ketol-acid reductoisomerase (NADP(+)) from Escherichia coli O6:K15:H31 (strain 536 / UPEC).